Consider the following 413-residue polypeptide: Clamp protein VP6 (413 aa).

It belongs to the reoviridae clamp protein family. In terms of assembly, interacts with capsid proteins VP3, VP4 and VP7.

The protein localises to the virion. Functionally, located at the interface of the incomplete T=13 outer capsid and the pseudo T=2 inner capsid, 120 VP6 subunits clamp and stabilize the inner capsid shell. The chain is Clamp protein VP6 (S8) from Ctenopharyngodon idella (Grass carp).